We begin with the raw amino-acid sequence, 220 residues long: Small ribosomal subunit protein uS5 (220 aa).

Residues 1 to 39 form a disordered region; the sequence is MAEQPAGQAGTTDNRDARGDREGRRRDSGRGSRERDGEK. The segment covering 13–39 has biased composition (basic and acidic residues); the sequence is DNRDARGDREGRRRDSGRGSRERDGEK. The S5 DRBM domain occupies 42-105; it reads YLERVVAINR…EEARKSFFRV (64 aa).

Belongs to the universal ribosomal protein uS5 family. In terms of assembly, part of the 30S ribosomal subunit. Contacts proteins S4 and S8.

With S4 and S12 plays an important role in translational accuracy. In terms of biological role, located at the back of the 30S subunit body where it stabilizes the conformation of the head with respect to the body. The polypeptide is Small ribosomal subunit protein uS5 (Mycobacterium bovis (strain ATCC BAA-935 / AF2122/97)).